Here is a 214-residue protein sequence, read N- to C-terminus: Cytochrome b (214 aa).

The next 4 membrane-spanning stretches (helical) occupy residues 31–51, 75–96, 111–131, and 176–196; these read FGSM…FLAI, WIMQ…YTHI, WLSG…GYVL, and FFAL…IHII. Positions 81 and 95 each coordinate heme b. Residues His180 and His194 each coordinate heme b. Residue His199 participates in a ubiquinone binding.

This sequence belongs to the cytochrome b family. In terms of assembly, the cytochrome bc1 complex contains 3 respiratory subunits (MT-CYB, CYC1 and UQCRFS1), 2 core proteins (UQCRC1 and UQCRC2) and probably 6 low-molecular weight proteins. Heme b is required as a cofactor.

The protein localises to the mitochondrion inner membrane. Functionally, component of the ubiquinol-cytochrome c reductase complex (complex III or cytochrome b-c1 complex) that is part of the mitochondrial respiratory chain. The b-c1 complex mediates electron transfer from ubiquinol to cytochrome c. Contributes to the generation of a proton gradient across the mitochondrial membrane that is then used for ATP synthesis. The protein is Cytochrome b (MT-CYB) of Cerastes cerastes (Horned desert viper).